The primary structure comprises 516 residues: Protein P54 (516 aa).

The signal sequence occupies residues 1 to 27 (MKKSLLSAVMLSSIALTAVGSPIAAAA). The interval 208–397 (ATAEDKKADL…PAPAPAPNPS (190 aa)) is disordered. Positions 210–236 (AEDKKADLNRKKAEAEAEQARIREQAR) are enriched in basic and acidic residues. Composition is skewed to low complexity over residues 237–247 (LAEQARQQAAQ) and 257–380 (QAAA…TVTP). Over residues 381–395 (APTPTPTPAPAPAPN) the composition is skewed to pro residues. One can recognise a NlpC/P60 domain in the interval 399 to 516 (SVNGAAIVAE…WYTPDFAVSM (118 aa)). Cysteine 429 serves as the catalytic Nucleophile. The Proton acceptor role is filled by histidine 480. Histidine 492 is a catalytic residue.

This sequence belongs to the peptidase C40 family.

It localises to the secreted. Its subcellular location is the cell wall. This chain is Protein P54, found in Enterococcus faecium (Streptococcus faecium).